The sequence spans 297 residues: Myoblast determination protein 1 homolog (297 aa).

The tract at residues 52-76 (KPEEHPHHHGHHHGHPHEEEHVRAP) is disordered. Residues 101-152 (DRRKAATMRERRRLSKVNEAFETLKRCTSTNPNQRLPKVEILRNAIRYIESL) form the bHLH domain. Disordered regions lie at residues 171–221 (SGES…GKSS) and 243–297 (CPIL…YQVL). Composition is skewed to polar residues over residues 174–184 (SDASSPRSNCS) and 258–297 (CSPQEGASLNDSGAQIPSPTNCTPLPQDSSSSSNPIYQVL).

Efficient DNA binding requires dimerization with another bHLH protein. Seems to form active heterodimers with ITF-2.

The protein localises to the nucleus. In terms of biological role, acts as a transcriptional activator that promotes transcription of muscle-specific target genes and plays a role in muscle differentiation. Induces fibroblasts to differentiate into myoblasts. Interacts with and is inhibited by the twist protein. This interaction probably involves the basic domains of both proteins. The polypeptide is Myoblast determination protein 1 homolog (MYOD1) (Coturnix japonica (Japanese quail)).